The following is a 268-amino-acid chain: Bis(5'-nucleosyl)-tetraphosphatase, symmetrical (268 aa).

This sequence belongs to the Ap4A hydrolase family.

It catalyses the reaction P(1),P(4)-bis(5'-adenosyl) tetraphosphate + H2O = 2 ADP + 2 H(+). Its function is as follows. Hydrolyzes diadenosine 5',5'''-P1,P4-tetraphosphate to yield ADP. In Vibrio campbellii (strain ATCC BAA-1116), this protein is Bis(5'-nucleosyl)-tetraphosphatase, symmetrical.